Consider the following 137-residue polypeptide: Nucleoside diphosphate kinase (137 aa).

Residues K9, F57, R85, T91, R102, and N112 each coordinate ATP. H115 serves as the catalytic Pros-phosphohistidine intermediate.

It belongs to the NDK family. In terms of assembly, homotetramer. Mg(2+) is required as a cofactor.

The protein localises to the cytoplasm. The enzyme catalyses a 2'-deoxyribonucleoside 5'-diphosphate + ATP = a 2'-deoxyribonucleoside 5'-triphosphate + ADP. The catalysed reaction is a ribonucleoside 5'-diphosphate + ATP = a ribonucleoside 5'-triphosphate + ADP. Functionally, major role in the synthesis of nucleoside triphosphates other than ATP. The ATP gamma phosphate is transferred to the NDP beta phosphate via a ping-pong mechanism, using a phosphorylated active-site intermediate. The sequence is that of Nucleoside diphosphate kinase from Leptospira biflexa serovar Patoc (strain Patoc 1 / ATCC 23582 / Paris).